The primary structure comprises 451 residues: tRNA modification GTPase MnmE (451 aa).

3 residues coordinate (6S)-5-formyl-5,6,7,8-tetrahydrofolate: arginine 28, glutamate 85, and lysine 124. The TrmE-type G domain maps to 220–373 (GLYTVLVGPP…LKTRLRTLLL (154 aa)). Asparagine 230 contacts K(+). Residues 230 to 235 (NVGKSS), 249 to 255 (TDVPGTT), and 274 to 277 (DTAG) each bind GTP. Serine 234 serves as a coordination point for Mg(2+). The K(+) site is built by threonine 249, valine 251, and threonine 254. Residue threonine 255 participates in Mg(2+) binding. Lysine 451 lines the (6S)-5-formyl-5,6,7,8-tetrahydrofolate pocket.

The protein belongs to the TRAFAC class TrmE-Era-EngA-EngB-Septin-like GTPase superfamily. TrmE GTPase family. Homodimer. Heterotetramer of two MnmE and two MnmG subunits. K(+) serves as cofactor.

It is found in the cytoplasm. Exhibits a very high intrinsic GTPase hydrolysis rate. Involved in the addition of a carboxymethylaminomethyl (cmnm) group at the wobble position (U34) of certain tRNAs, forming tRNA-cmnm(5)s(2)U34. The chain is tRNA modification GTPase MnmE from Xylella fastidiosa (strain Temecula1 / ATCC 700964).